The following is a 332-amino-acid chain: Ribosomal RNA small subunit methyltransferase H (332 aa).

S-adenosyl-L-methionine-binding positions include 39–41 (GGY), Asp56, Phe83, Asp100, and Gln107.

It belongs to the methyltransferase superfamily. RsmH family.

The protein resides in the cytoplasm. The enzyme catalyses cytidine(1402) in 16S rRNA + S-adenosyl-L-methionine = N(4)-methylcytidine(1402) in 16S rRNA + S-adenosyl-L-homocysteine + H(+). Functionally, specifically methylates the N4 position of cytidine in position 1402 (C1402) of 16S rRNA. The protein is Ribosomal RNA small subunit methyltransferase H of Bartonella quintana (strain Toulouse) (Rochalimaea quintana).